Reading from the N-terminus, the 113-residue chain is Ranasmurfin (113 aa).

At Y2 the chain carries 2',4',5'-topaquinone. A cross-link (lysine tyrosylquinone (Tyr-Lys)) is located at residues 2–31; the sequence is YACSFPPSEIPGSKECLAEALQKHQGFKKK. Cystine bridges form between C4–C62, C17–C65, and C37–C101. Aminomalonic acid (Ser); in chain B is present on S9. The segment at residues 17 to 65 is a cross-link (S-cysteinyl 3-(oxidosulfanyl)alanine (Cys-Cys); in chain B); sequence CLAEALQKHQGFKKKSYALICAYLNYKEDAENYERAAEDFDSAVKCTGC. The segment at residues 30–108 is a cross-link (lysine tyrosylquinone (Lys-Tyr)); it reads KKSYALICAY…SLCTLFQKLY (79 aa). Position 65 is a cysteine sulfenic acid (-SOH); in chain B (C65). 2',4',5'-topaquinone is present on Y108. Positions 108 and 112 each coordinate Zn(2+). A 5'-tyrosyl-5'-aminotyrosine (Tyr-Tyr) (interchain with Y-108) cross-link involves residue Y108.

Homodimer. The two chains, designated A and B, differ in their modifications, but not, it is thought, in their sequence. The cofactor is Zn(2+). In terms of tissue distribution, foam nest.

It is found in the secreted. The polypeptide is Ranasmurfin (Polypedates leucomystax (Common tree frog)).